Consider the following 242-residue polypeptide: Terpene cyclase cle7 (242 aa).

7 consecutive transmembrane segments (helical) span residues 20–40 (LLLTLFSLSGTGWLINYITTI), 50–69 (GVSLVALTNNLAWELVFAIL), 79–101 (VILRSWLFVDIFVIYTTAKFARS), 117–137 (LFVLFGILGFFSGHWALSVLL), 143–163 (FYWSGMMCLVVMSGTALGILV), 172–192 (SYGMWFSRFVGSIFAVASLFL), and 207–227 (ILMRWFAGAFVVLDGLYGVCF).

The protein belongs to the paxB family.

The protein resides in the membrane. It functions in the pathway secondary metabolite biosynthesis; terpenoid biosynthesis. In terms of biological role, non-reducing polyketide synthase; part of the cluster A that mediates the biosynthesis of chevalone E and its oxidized derivatives that possess a unique five-membered lactone ring and can synergistically enhance the cytotoxicity of doxorubicin (DOX) in breast cancer cells. Within the pathway, cle7 takes part to the biosynthesis of the molecular scaffold by catalyzing the cyclization of the prenyl group initiated by protonation and ring-opening of the epoxide to produce the chevalone E intermediate. The molecular scaffold is commonly biosynthesized by a series of enzymes including the non-reducing polyketide synthase (NR-PKS) cle1 that produces the alpha-pyrone triacetic acid lactone (TAL); The membrane-bound prenyltransferase cle5 that accepts TAL as its substrate to perform a C-3 geranylgeranylation reaction, in which the pathway-dedicated GGPS cle6 is required to provide GGPP, the other substrate of cle5; the FAD-dependent monooxygenase Cle3 that forms an (S)-epoxide ring at the terminal olefin of the geranylgeranyl group; and the terpene cyclase Cle7 that catalyzes the cyclization of the prenyl group that yields the pentacyclic pathway intermediate chevalone E. Chevalone E can derivatize into seven new oxidized analogs by the cytochrome P450 monooxygenases cle2 (acting at C-20) and cle4 (acting at C-11 and C-12). This is Terpene cyclase cle7 from Aspergillus versicolor.